The chain runs to 370 residues: Phosphoserine aminotransferase (370 aa).

Residue Met1 is modified to N-acetylmethionine. Residues His44 and Arg45 each coordinate O-phospho-L-serine. Position 51 is an N6-acetyllysine (Lys51). Positions 79, 80, and 107 each coordinate pyridoxal 5'-phosphate. Residue Lys127 is modified to N6-acetyllysine. Thr156, Asp176, and Gln199 together coordinate pyridoxal 5'-phosphate. Position 200 is an N6-(pyridoxal phosphate)lysine (Lys200). Pyridoxal 5'-phosphate contacts are provided by Asn241 and Thr242. Residues Lys269, Lys318, and Lys323 each carry the N6-acetyllysine modification. A Phosphoserine modification is found at Ser331. At Lys333 the chain carries N6-acetyllysine. Residues His335, Arg336, and Arg342 each coordinate O-phospho-L-serine.

This sequence belongs to the class-V pyridoxal-phosphate-dependent aminotransferase family. SerC subfamily. Homodimer. Pyridoxal 5'-phosphate is required as a cofactor.

It carries out the reaction O-phospho-L-serine + 2-oxoglutarate = 3-phosphooxypyruvate + L-glutamate. The protein operates within amino-acid biosynthesis; L-serine biosynthesis; L-serine from 3-phospho-D-glycerate: step 2/3. In terms of biological role, involved in L-serine biosynthesis via the phosphorylated pathway, a three-step pathway converting the glycolytic intermediate 3-phospho-D-glycerate into L-serine. Catalyzes the second step, that is the pyridoxal 5'-phosphate-dependent transamination of 3-phosphohydroxypyruvate and L-glutamate to O-phosphoserine (OPS) and alpha-ketoglutarate. This chain is Phosphoserine aminotransferase (PSAT1), found in Oryctolagus cuniculus (Rabbit).